A 498-amino-acid chain; its full sequence is ATP synthase subunit beta, chloroplastic (498 aa).

ATP is bound at residue 172 to 179 (GGAGVGKT).

This sequence belongs to the ATPase alpha/beta chains family. As to quaternary structure, F-type ATPases have 2 components, CF(1) - the catalytic core - and CF(0) - the membrane proton channel. CF(1) has five subunits: alpha(3), beta(3), gamma(1), delta(1), epsilon(1). CF(0) has four main subunits: a(1), b(1), b'(1) and c(9-12).

It localises to the plastid. Its subcellular location is the chloroplast thylakoid membrane. It catalyses the reaction ATP + H2O + 4 H(+)(in) = ADP + phosphate + 5 H(+)(out). Its function is as follows. Produces ATP from ADP in the presence of a proton gradient across the membrane. The catalytic sites are hosted primarily by the beta subunits. The sequence is that of ATP synthase subunit beta, chloroplastic from Vitis vinifera (Grape).